Reading from the N-terminus, the 200-residue chain is MTSKIFSPKISAVIESLRKLPTIGKKSSQRLALYLLDKSPETAIAIANSLLDATANIKKCVYCQALTEDDVCNICSNTNRDDTKLCIIESMLDMIAIEEAGIYRGKYFVLNGRISPLDGIGPSELKLDILQQIIADRKIDEVILAISPTVEGETTAHFISQMIAKDIKISRIGFGVPFGGELEYLDQQTLLHAFNTRTNI.

The segment at 60-75 (CVYCQALTEDDVCNIC) adopts a C4-type zinc-finger fold. Positions 83 to 177 (TKLCIIESML…KISRIGFGVP (95 aa)) constitute a Toprim domain.

The protein belongs to the RecR family.

May play a role in DNA repair. It seems to be involved in an RecBC-independent recombinational process of DNA repair. It may act with RecF and RecO. The sequence is that of Recombination protein RecR from Francisella tularensis subsp. holarctica (strain OSU18).